A 792-amino-acid chain; its full sequence is Cis-abienol synthase, chloroplastic (792 aa).

A chloroplast-targeting transit peptide spans 1 to 37; the sequence is MVLGLRSKIIPLPDHKLGNIKLGSVTNAICHRPCRVR. Positions 539, 543, 684, and 692 each coordinate Mg(2+). A DDXXD motif motif is present at residues 539–543; sequence DDFFD.

It belongs to the terpene synthase family. Requires Mg(2+) as cofactor. In terms of tissue distribution, expressed specifically in trichomes.

Its subcellular location is the plastid. The protein resides in the chloroplast. It catalyses the reaction 8-hydroxycopalyl diphosphate = cis-abienol + diphosphate. It functions in the pathway secondary metabolite biosynthesis; terpenoid biosynthesis. In terms of biological role, involved in the biosynthesis of cis-abienol, a labdane diterpene that can be used as synthesis precursor of ambergris substitution fragance products. This is Cis-abienol synthase, chloroplastic from Nicotiana tabacum (Common tobacco).